A 74-amino-acid chain; its full sequence is UPF0435 protein Bcer98_0391 (74 aa).

This sequence belongs to the UPF0435 family.

The chain is UPF0435 protein Bcer98_0391 from Bacillus cytotoxicus (strain DSM 22905 / CIP 110041 / 391-98 / NVH 391-98).